Consider the following 280-residue polypeptide: Golgi to ER traffic protein 2 (280 aa).

The Cytoplasmic portion of the chain corresponds to 1–149 (MPSDREKQRI…IAYNLYQQRK (149 aa)). The disordered stretch occupies residues 15–59 (RQAKMAKGGASDRLNKILSQGSSVKTSAVSVLDQPQPADHDPEGM). The span at 31–43 (ILSQGSSVKTSAV) shows a compositional bias: polar residues. A helical membrane pass occupies residues 150–170 (VRHRFLVVRMVSILANFVYHF). At 171–197 (LTISDFSFSPSANPFIRSIPPTSSVSS) the chain is on the lumenal side. Residues 198–217 (FFQIFVAIEAVLVAAYIAAS) form a helical membrane-spanning segment. Topologically, residues 218–257 (RNVPSNNNGLLVKGISMAAMFVPKLQRFQPLIMKIIGCWD) are cytoplasmic. The chain crosses the membrane as a helical span at residues 258 to 278 (TVTFVLNDLGLVVLLFGLISF). Topologically, residues 279–280 (RR) are lumenal.

It belongs to the GET2 family. As to quaternary structure, component of the Golgi to ER traffic (GET) complex, which is composed of GET1, GET2 and GET3. Within the complex, GET1 and GET2 form a heterotetramer which is stabilized by phosphatidylinositol binding and which binds to the GET3 homodimer.

The protein resides in the endoplasmic reticulum membrane. The protein localises to the golgi apparatus membrane. Functionally, required for the post-translational delivery of tail-anchored (TA) proteins to the endoplasmic reticulum. Together with GET1, acts as a membrane receptor for soluble GET3, which recognizes and selectively binds the transmembrane domain of TA proteins in the cytosol. The GET complex cooperates with the HDEL receptor ERD2 to mediate the ATP-dependent retrieval of resident ER proteins that contain a C-terminal H-D-E-L retention signal from the Golgi to the ER. The polypeptide is Golgi to ER traffic protein 2 (Meyerozyma guilliermondii (strain ATCC 6260 / CBS 566 / DSM 6381 / JCM 1539 / NBRC 10279 / NRRL Y-324) (Yeast)).